A 508-amino-acid polypeptide reads, in one-letter code: Light-independent protochlorophyllide reductase subunit B (508 aa).

Asp-36 provides a ligand contact to [4Fe-4S] cluster. The active-site Proton donor is the Asp-294. 429-430 contacts substrate; the sequence is GM.

This sequence belongs to the ChlB/BchB/BchZ family. As to quaternary structure, protochlorophyllide reductase is composed of three subunits; ChlL, ChlN and ChlB. Forms a heterotetramer of two ChlB and two ChlN subunits. Requires [4Fe-4S] cluster as cofactor.

It catalyses the reaction chlorophyllide a + oxidized 2[4Fe-4S]-[ferredoxin] + 2 ADP + 2 phosphate = protochlorophyllide a + reduced 2[4Fe-4S]-[ferredoxin] + 2 ATP + 2 H2O. The protein operates within porphyrin-containing compound metabolism; chlorophyll biosynthesis (light-independent). Component of the dark-operative protochlorophyllide reductase (DPOR) that uses Mg-ATP and reduced ferredoxin to reduce ring D of protochlorophyllide (Pchlide) to form chlorophyllide a (Chlide). This reaction is light-independent. The NB-protein (ChlN-ChlB) is the catalytic component of the complex. The sequence is that of Light-independent protochlorophyllide reductase subunit B from Trichormus variabilis (strain ATCC 29413 / PCC 7937) (Anabaena variabilis).